A 146-amino-acid polypeptide reads, in one-letter code: Metallothiol transferase FosB (146 aa).

The VOC domain occupies 4 to 120; it reads GINHMTFSVS…DGHLLEVHTG (117 aa). Residues H7, H66, and E116 each contribute to the Mg(2+) site. E116 serves as the catalytic Proton donor/acceptor.

This sequence belongs to the fosfomycin resistance protein family. FosB subfamily. As to quaternary structure, homodimer. It depends on Mg(2+) as a cofactor.

It localises to the cytoplasm. In terms of biological role, metallothiol transferase which confers resistance to fosfomycin by catalyzing the addition of a thiol cofactor to fosfomycin. L-cysteine is probably the physiological thiol donor. The sequence is that of Metallothiol transferase FosB from Shouchella clausii (strain KSM-K16) (Alkalihalobacillus clausii).